The following is a 598-amino-acid chain: MDLSRSQTNFQLGFGCSHASMTPTPTPRAPIADDSINLQVDQSFRSLPTTFSPIPLQLLEQKAEKTTTVDEPKKDGGGGGDQKEDEHFRILGHHMCLKRQRDCPLLLTQSKHPKRSSIGDSDLESRRAAVRAWGDQPIHLADPDIHELMEKEKQRQVRGIELIASENFVCRAVMEALGSHLTNKYSEGMPGARYYTGNQYIDQIENLCIERALTAFGLESDKWGVNVQPYSCTSANFAVYTGLLLPGERIMGLDSPSGGHMSHGYCTPGGKKISAASIFFESFPYKVNPQTGYIDYDKLEDKALDYRPKILICGGSSYPRDWDFARVRQIADKCGAVLMCDMAHISGLVATKECSNPFDHCDIVTSTTHKGLRGPRGGIIFYRRGPKIRKQGHHSSHCDTSTHYDLEEKINFAVFPSLQGGPHNNHIAALAIALKQVATPEYKAYIQQMKKNAQALAAALLRRKCRLVTGGTDNHLLLWDLTPMGLTGKVYEKVCEMCHITLNKTAIFGDNGTISPGGVRIGTPAMTTRGCIESDFETMADFLIKAAQITSALQREHGKSHKEFVKSLCTNKDIAELRNRVEAFALQYEMPASLIRIE.

Residues 57 to 85 (QLLEQKAEKTTTVDEPKKDGGGGGDQKED) are disordered. Basic and acidic residues predominate over residues 61–85 (QKAEKTTTVDEPKKDGGGGGDQKED). Position 370 is an N6-(pyridoxal phosphate)lysine (Lys370).

Belongs to the SHMT family. In terms of assembly, homotetramer. Requires pyridoxal 5'-phosphate as cofactor.

The protein localises to the cytoplasm. The enzyme catalyses (6R)-5,10-methylene-5,6,7,8-tetrahydrofolate + glycine + H2O = (6S)-5,6,7,8-tetrahydrofolate + L-serine. It participates in one-carbon metabolism; tetrahydrofolate interconversion. Its function is as follows. Catalyzes the interconversion of serine and glycine. The protein is Serine hydroxymethyltransferase 7 (SHM7) of Arabidopsis thaliana (Mouse-ear cress).